Consider the following 712-residue polypeptide: Elongation factor G (712 aa).

The tr-type G domain occupies 8 to 290; the sequence is TRYRNIGISA…AVIEFLPSPT (283 aa). Residues 17–24, 88–92, and 142–145 contribute to the GTP site; these read AHIDAGKT, DTPGH, and NKMD.

The protein belongs to the TRAFAC class translation factor GTPase superfamily. Classic translation factor GTPase family. EF-G/EF-2 subfamily.

Its subcellular location is the cytoplasm. Catalyzes the GTP-dependent ribosomal translocation step during translation elongation. During this step, the ribosome changes from the pre-translocational (PRE) to the post-translocational (POST) state as the newly formed A-site-bound peptidyl-tRNA and P-site-bound deacylated tRNA move to the P and E sites, respectively. Catalyzes the coordinated movement of the two tRNA molecules, the mRNA and conformational changes in the ribosome. The chain is Elongation factor G from Acinetobacter baumannii (strain AB307-0294).